Here is a 427-residue protein sequence, read N- to C-terminus: Glutamate-1-semialdehyde 2,1-aminomutase (427 aa).

Lys265 is subject to N6-(pyridoxal phosphate)lysine.

Belongs to the class-III pyridoxal-phosphate-dependent aminotransferase family. HemL subfamily. In terms of assembly, homodimer. Requires pyridoxal 5'-phosphate as cofactor.

The protein localises to the cytoplasm. The enzyme catalyses (S)-4-amino-5-oxopentanoate = 5-aminolevulinate. It participates in porphyrin-containing compound metabolism; protoporphyrin-IX biosynthesis; 5-aminolevulinate from L-glutamyl-tRNA(Glu): step 2/2. In Burkholderia lata (strain ATCC 17760 / DSM 23089 / LMG 22485 / NCIMB 9086 / R18194 / 383), this protein is Glutamate-1-semialdehyde 2,1-aminomutase.